A 1048-amino-acid polypeptide reads, in one-letter code: Putative truncated guanine nucleotide exchange factor SDC25 (1048 aa).

Disordered regions lie at residues Ser-208–Ser-242 and Leu-419–Glu-444. Residues Thr-212–Ser-224 are compositionally biased toward low complexity. Residues Ser-578–Lys-710 form the N-terminal Ras-GEF domain. Residues Asp-748–Lys-995 form the Ras-GEF domain. Residues Arg-997–Lys-1048 form a disordered region. Over residues Ser-1010–Pro-1032 the composition is skewed to basic and acidic residues. Positions Gln-1035 to Lys-1048 are enriched in basic residues.

Functionally, promotes the exchange of Ras-bound GDP by GTP. The polypeptide is Putative truncated guanine nucleotide exchange factor SDC25 (SDC25) (Saccharomyces cerevisiae (strain ATCC 204508 / S288c) (Baker's yeast)).